The chain runs to 87 residues: Small ribosomal subunit protein bS20 (87 aa).

Positions Met1–Asn21 are disordered. Basic residues predominate over residues Gln7–Lys20.

Belongs to the bacterial ribosomal protein bS20 family.

Functionally, binds directly to 16S ribosomal RNA. The sequence is that of Small ribosomal subunit protein bS20 from Phytoplasma mali (strain AT).